A 432-amino-acid polypeptide reads, in one-letter code: Enolase (432 aa).

A (2R)-2-phosphoglycerate-binding site is contributed by Gln163. Glu205 acts as the Proton donor in catalysis. Mg(2+) is bound by residues Asp242, Glu285, and Asp312. Positions 337, 366, 367, and 388 each coordinate (2R)-2-phosphoglycerate. Lys337 acts as the Proton acceptor in catalysis.

The protein belongs to the enolase family. It depends on Mg(2+) as a cofactor.

Its subcellular location is the cytoplasm. The protein localises to the secreted. It localises to the cell surface. It carries out the reaction (2R)-2-phosphoglycerate = phosphoenolpyruvate + H2O. It functions in the pathway carbohydrate degradation; glycolysis; pyruvate from D-glyceraldehyde 3-phosphate: step 4/5. In terms of biological role, catalyzes the reversible conversion of 2-phosphoglycerate (2-PG) into phosphoenolpyruvate (PEP). It is essential for the degradation of carbohydrates via glycolysis. This is Enolase from Desulfovibrio desulfuricans (strain ATCC 27774 / DSM 6949 / MB).